The sequence spans 362 residues: Outer membrane porin protein OmpD (362 aa).

The signal sequence occupies residues 1 to 21; sequence MKLKLVAVAVTSLLAAGVVNA.

It belongs to the Gram-negative porin family. Homotrimer.

It localises to the cell outer membrane. Forms pores that allow passive diffusion of small molecules across the outer membrane. The protein is Outer membrane porin protein OmpD (ompD) of Salmonella choleraesuis (strain SC-B67).